The following is a 332-amino-acid chain: Flotillin-like protein FloA (332 aa).

A run of 2 helical transmembrane segments spans residues 6 to 26 (LGYL…FSFV) and 28 to 48 (VGLW…YMIG).

Belongs to the flotillin-like FloA family. Homooligomerizes.

It is found in the cell membrane. The protein resides in the membrane raft. In terms of biological role, found in functional membrane microdomains (FMM) that may be equivalent to eukaryotic membrane rafts. FMMs are highly dynamic and increase in number as cells age. Flotillins are thought to be important factors in membrane fluidity. The sequence is that of Flotillin-like protein FloA from Symbiobacterium thermophilum (strain DSM 24528 / JCM 14929 / IAM 14863 / T).